We begin with the raw amino-acid sequence, 995 residues long: uncharacterized protein (995 aa).

This is an uncharacterized protein from Caenorhabditis elegans.